The primary structure comprises 189 residues: Auxin-responsive protein IAA3 (189 aa).

An EAR-like (transcriptional repression) motif is present at residues 12–16 (LRLGL). Positions 42-65 (TDTEKEIESSSRKTETSPPRKAQI) are disordered. Residues 43-56 (DTEKEIESSSRKTE) are compositionally biased toward basic and acidic residues. Residues 92-179 (GIYVKVSMDG…TCKRLRIMKG (88 aa)) form the PB1 domain.

Belongs to the Aux/IAA family. As to quaternary structure, homodimers and heterodimers. Interacts with TPL. Interacts with TIR1, the F-box component of the Skp1-Cdc53/cullin-F-box (SCFTIR1) E3 ubiquitin ligase complex. Post-translationally, phosphorylated by phytochrome A in vitro. Highly expressed in stems and flowers. Expressed in hypocotyls, cotyledons and leaves, but barely detected in roots. Expressed in root tips. In the root meristem, specifically detected at the vascular tissue transition zone.

It is found in the nucleus. Its function is as follows. Aux/IAA proteins are short-lived transcriptional factors that function as repressors of early auxin response genes at low auxin concentrations. Repression is thought to result from the interaction with auxin response factors (ARFs), proteins that bind to the auxin-responsive promoter element (AuxRE). Plays a central role in auxin regulation of root growth, in gravitropism, and in lateral root formation. Regulated by an auxin-induced protein turnover. Formation of heterodimers with ARF proteins may alter their ability to modulate early auxin response genes expression. When activated by cytokinin, restricts the expression of the PIN genes to the vascular transition zone. Induction of SHY2 in the vascular transition zone restricts BRX expression to down-regulate PIN3 and thus limit meristem growth, but proper SHY2 expression requires BRX. Involved in meristem growth and in determining its size. May participate in strigolactone signaling to regulate meristem size and lateral root formation. This chain is Auxin-responsive protein IAA3 (IAA3), found in Arabidopsis thaliana (Mouse-ear cress).